The primary structure comprises 54 residues: Large ribosomal subunit protein bL33 (54 aa).

Belongs to the bacterial ribosomal protein bL33 family.

The sequence is that of Large ribosomal subunit protein bL33 from Corynebacterium efficiens (strain DSM 44549 / YS-314 / AJ 12310 / JCM 11189 / NBRC 100395).